Here is a 648-residue protein sequence, read N- to C-terminus: DNA ligase (648 aa).

NAD(+)-binding positions include Asp30–Asp34, Ser79–Met80, and Glu108. Residue Lys110 is the N6-AMP-lysine intermediate of the active site. NAD(+)-binding residues include Arg131, Glu165, Lys280, and Lys304. Residues Cys398, Cys401, Cys414, and Cys419 each coordinate Zn(2+). The 76-residue stretch at Ala573–Leu648 folds into the BRCT domain.

The protein belongs to the NAD-dependent DNA ligase family. LigA subfamily. The cofactor is Mg(2+). It depends on Mn(2+) as a cofactor.

It catalyses the reaction NAD(+) + (deoxyribonucleotide)n-3'-hydroxyl + 5'-phospho-(deoxyribonucleotide)m = (deoxyribonucleotide)n+m + AMP + beta-nicotinamide D-nucleotide.. Its function is as follows. DNA ligase that catalyzes the formation of phosphodiester linkages between 5'-phosphoryl and 3'-hydroxyl groups in double-stranded DNA using NAD as a coenzyme and as the energy source for the reaction. It is essential for DNA replication and repair of damaged DNA. The chain is DNA ligase from Sulfurovum sp. (strain NBC37-1).